The sequence spans 141 residues: Large ribosomal subunit protein uL11 (141 aa).

The protein belongs to the universal ribosomal protein uL11 family. As to quaternary structure, part of the ribosomal stalk of the 50S ribosomal subunit. Interacts with L10 and the large rRNA to form the base of the stalk. L10 forms an elongated spine to which L12 dimers bind in a sequential fashion forming a multimeric L10(L12)X complex. Post-translationally, one or more lysine residues are methylated.

Its function is as follows. Forms part of the ribosomal stalk which helps the ribosome interact with GTP-bound translation factors. The sequence is that of Large ribosomal subunit protein uL11 from Kosmotoga olearia (strain ATCC BAA-1733 / DSM 21960 / TBF 19.5.1).